A 492-amino-acid polypeptide reads, in one-letter code: N-succinylglutamate 5-semialdehyde dehydrogenase (492 aa).

An NAD(+)-binding site is contributed by 220 to 225; sequence GSANTG. Residues glutamate 243 and cysteine 277 contribute to the active site.

This sequence belongs to the aldehyde dehydrogenase family. AstD subfamily.

The enzyme catalyses N-succinyl-L-glutamate 5-semialdehyde + NAD(+) + H2O = N-succinyl-L-glutamate + NADH + 2 H(+). The protein operates within amino-acid degradation; L-arginine degradation via AST pathway; L-glutamate and succinate from L-arginine: step 4/5. In terms of biological role, catalyzes the NAD-dependent reduction of succinylglutamate semialdehyde into succinylglutamate. This is N-succinylglutamate 5-semialdehyde dehydrogenase from Escherichia coli O127:H6 (strain E2348/69 / EPEC).